A 560-amino-acid polypeptide reads, in one-letter code: Dimethylaniline monooxygenase [N-oxide-forming] 4 (560 aa).

FAD is bound by residues 9–13 (GAGVS), Glu-32, and 40–41 (LW). NADP(+)-binding positions include 60-61 (TN) and 195-198 (TGGD). A helical membrane pass occupies residues 510–530 (LSHYLIAWGAPVLLVSLLLIY).

The protein belongs to the FMO family. The cofactor is FAD.

The protein resides in the microsome membrane. The protein localises to the endoplasmic reticulum membrane. The enzyme catalyses N,N-dimethylaniline + NADPH + O2 + H(+) = N,N-dimethylaniline N-oxide + NADP(+) + H2O. In terms of biological role, this protein is involved in the oxidative metabolism of a variety of xenobiotics such as drugs and pesticides. The chain is Dimethylaniline monooxygenase [N-oxide-forming] 4 (Fmo4) from Mus musculus (Mouse).